Reading from the N-terminus, the 177-residue chain is Probable nicotinate-nucleotide adenylyltransferase (177 aa).

This sequence belongs to the NadD family.

The catalysed reaction is nicotinate beta-D-ribonucleotide + ATP + H(+) = deamido-NAD(+) + diphosphate. Its pathway is cofactor biosynthesis; NAD(+) biosynthesis; deamido-NAD(+) from nicotinate D-ribonucleotide: step 1/1. Catalyzes the reversible adenylation of nicotinate mononucleotide (NaMN) to nicotinic acid adenine dinucleotide (NaAD). This is Probable nicotinate-nucleotide adenylyltransferase from Nitratiruptor sp. (strain SB155-2).